The following is a 245-amino-acid chain: Putative insertion sequence ATP-binding protein y4pL (245 aa).

106–113 contacts ATP; the sequence is GPSGVGKS.

This sequence belongs to the IS21/IS1162 putative ATP-binding protein family.

The protein is Putative insertion sequence ATP-binding protein y4pL of Sinorhizobium fredii (strain NBRC 101917 / NGR234).